The primary structure comprises 355 residues: (3aS,4S,5R,7aS)-5-hydroxy-7a-methyl-1-oxo-octahydro-1H-indene-4-carboxyl-CoA dehydrogenase (355 aa).

Residues 21–23 (GMG), 173–175 (AGG), and 196–197 (GT) contribute to the FMN site.

The protein belongs to the nitronate monooxygenase family.

The enzyme catalyses (3aS,4S,5R,7aS)-5-hydroxy-7a-methyl-1-oxo-octahydro-1H-indene-4-carboxyl-CoA + NAD(+) = (5R,7aS)-5-hydroxy-7a-methyl-1-oxo-2,3,5,6,7,7a-hexahydro-1H-indene-carboxyl-CoA + NADH + H(+). It functions in the pathway steroid metabolism; cholesterol degradation. Its activity is regulated as follows. Requires the presence of IpdF. Involved in the final steps of cholesterol and steroid degradation. Probably catalyzes the introduction of a double bound into the C ring of 5OH-HIC-CoA, leading to the formation of (5R,7aS)-5-hydroxy-7a-methyl-1-oxo-3,5,6,7-tetrahydro-2H-indene-4-carboxyl-CoA. This is (3aS,4S,5R,7aS)-5-hydroxy-7a-methyl-1-oxo-octahydro-1H-indene-4-carboxyl-CoA dehydrogenase from Mycobacterium tuberculosis (strain ATCC 25618 / H37Rv).